The sequence spans 207 residues: Thymidine kinase (207 aa).

ATP-binding positions include 15 to 22 and 88 to 91; these read GSMFSGKS and DEVQ. Residue glutamate 89 is the Proton acceptor of the active site. Residues cysteine 145, cysteine 148, cysteine 183, and histidine 186 each contribute to the Zn(2+) site.

This sequence belongs to the thymidine kinase family. Homotetramer.

The protein resides in the cytoplasm. The catalysed reaction is thymidine + ATP = dTMP + ADP + H(+). This Oceanobacillus iheyensis (strain DSM 14371 / CIP 107618 / JCM 11309 / KCTC 3954 / HTE831) protein is Thymidine kinase.